The sequence spans 232 residues: Small ribosomal subunit protein uS5 (232 aa).

Residues 1-47 are disordered; the sequence is MAAEVTETAQPVETAASTDNNREQREPRRGGRERNPNRDRGNRDADK. The span at 7–19 shows a compositional bias: polar residues; that stretch reads ETAQPVETAASTD. A compositionally biased stretch (basic and acidic residues) spans 20–47; that stretch reads NNREQREPRRGGRERNPNRDRGNRDADK. The S5 DRBM domain maps to 50-113; sequence FLERVVTINR…EEAKKNFFRV (64 aa).

It belongs to the universal ribosomal protein uS5 family. Part of the 30S ribosomal subunit. Contacts proteins S4 and S8.

In terms of biological role, with S4 and S12 plays an important role in translational accuracy. Located at the back of the 30S subunit body where it stabilizes the conformation of the head with respect to the body. This Leifsonia xyli subsp. xyli (strain CTCB07) protein is Small ribosomal subunit protein uS5.